The sequence spans 351 residues: Histidinol-phosphate aminotransferase (351 aa).

Residue lysine 213 is modified to N6-(pyridoxal phosphate)lysine.

It belongs to the class-II pyridoxal-phosphate-dependent aminotransferase family. Histidinol-phosphate aminotransferase subfamily. As to quaternary structure, homodimer. Pyridoxal 5'-phosphate is required as a cofactor.

It catalyses the reaction L-histidinol phosphate + 2-oxoglutarate = 3-(imidazol-4-yl)-2-oxopropyl phosphate + L-glutamate. It participates in amino-acid biosynthesis; L-histidine biosynthesis; L-histidine from 5-phospho-alpha-D-ribose 1-diphosphate: step 7/9. In Clostridium kluyveri (strain NBRC 12016), this protein is Histidinol-phosphate aminotransferase.